Here is a 181-residue protein sequence, read N- to C-terminus: uncharacterized protein (181 aa).

Residues 1–159 enclose the N-acetyltransferase domain; the sequence is MTVHHFTFHI…KACWMMQSLT (159 aa).

This sequence belongs to the acetyltransferase family.

This is an uncharacterized protein from Escherichia coli (strain K12).